Reading from the N-terminus, the 544-residue chain is Chaperonin GroEL 1 (544 aa).

Residues 29–32 (TLGP), 86–90 (DGTTT), glycine 413, 479–481 (NAA), and aspartate 495 each bind ATP.

This sequence belongs to the chaperonin (HSP60) family. In terms of assembly, forms a cylinder of 14 subunits composed of two heptameric rings stacked back-to-back. Interacts with the co-chaperonin GroES.

Its subcellular location is the cytoplasm. The enzyme catalyses ATP + H2O + a folded polypeptide = ADP + phosphate + an unfolded polypeptide.. Its function is as follows. Together with its co-chaperonin GroES, plays an essential role in assisting protein folding. The GroEL-GroES system forms a nano-cage that allows encapsulation of the non-native substrate proteins and provides a physical environment optimized to promote and accelerate protein folding. This is Chaperonin GroEL 1 from Parasynechococcus marenigrum (strain WH8102).